We begin with the raw amino-acid sequence, 349 residues long: MALLRKINQVLLFLLIVTLCVILYKKVHKGTVPKNDADDESETPEELEEEIPVVICAAAGRMGATMAAINSIYSNTDANILFYVVGLRNTLTRIRKWIEHSKLREINFKIVEFNPMVLKGKIRPDSSRPELLQPLNFVRFYLPLLIHQHEKVIYLDDDVIVQGDIQELYDTTLALGHAAAFSDDCDLPSAQDINRLVGLQNTYMGYLDYRKKAIKDLGISPSTCSFNPGVIVANMTEWKHQRITKQLEKWMQKNVEENLYSSSLGGGVATSPMLIVFHGKYSTINPLWHIRHLGWNPDARYSEHFLQEAKLLHWNGRHKPWDFPSVHNDLWESWFVPDPAGIFKLNHHS.

Over methionine 1–lysine 6 the chain is Cytoplasmic. Residues isoleucine 7–tyrosine 24 traverse the membrane as a helical; Signal-anchor for type II membrane protein segment. At lysine 25 to serine 349 the chain is on the lumenal side. The N-linked (GlcNAc...) asparagine glycan is linked to asparagine 234.

The protein belongs to the glycosyltransferase 8 family.

It localises to the membrane. This chain is Glycosyltransferase 8 domain-containing protein 2 (GLT8D2), found in Homo sapiens (Human).